Reading from the N-terminus, the 134-residue chain is Interleukin-4 (134 aa).

The N-terminal stretch at 1-23 (MGLTYQLLPALVCLLACTSFIQG) is a signal peptide. Disulfide bonds link Cys-24-Cys-133 and Cys-48-Cys-88. Asn-38 carries an N-linked (GlcNAc...) asparagine glycan. The N-linked (GlcNAc...) asparagine glycan is linked to Asn-101.

Belongs to the IL-4/IL-13 family.

Its subcellular location is the secreted. Functionally, participates in at least several B-cell activation processes as well as of other cell types. It is a costimulator of DNA-synthesis. It induces the expression of class II MHC molecules on resting B-cells. It enhances both secretion and cell surface expression of IgE and IgG1. It also regulates the expression of the low affinity Fc receptor for IgE (CD23) on both lymphocytes and monocytes. Positively regulates IL31RA expression in macrophages. Stimulates autophagy in dendritic cells by interfering with mTORC1 signaling and through the induction of RUFY4. In Equus caballus (Horse), this protein is Interleukin-4 (IL4).